A 115-amino-acid chain; its full sequence is U31-theraphotoxin-Cg1a (115 aa).

A signal peptide spans 1 to 18 (MKLCVIIIASLMVASVSG). The propeptide occupies 19–51 (RLRKIKGTELDKKMLLEKLGHGMDIRFEETPRA). Cystine bridges form between Cys-52-Cys-67, Cys-60-Cys-73, Cys-64-Cys-113, and Cys-66-Cys-86.

The protein belongs to the neurotoxin 03 (Tx2) family. 02 subfamily. Expressed by the venom gland.

The protein resides in the secreted. Probable ion channel inhibitor. In Chilobrachys guangxiensis (Chinese earth tiger tarantula), this protein is U31-theraphotoxin-Cg1a.